We begin with the raw amino-acid sequence, 59 residues long: ATP synthase protein 8 (59 aa).

A helical transmembrane segment spans residues 7–23 (LSPPFLYFELIGHFQVE).

It belongs to the ATPase protein 8 family. F-type ATPases have 2 components, CF(1) - the catalytic core - and CF(0) - the membrane proton channel.

Its subcellular location is the mitochondrion membrane. Mitochondrial membrane ATP synthase (F(1)F(0) ATP synthase or Complex V) produces ATP from ADP in the presence of a proton gradient across the membrane which is generated by electron transport complexes of the respiratory chain. F-type ATPases consist of two structural domains, F(1) - containing the extramembraneous catalytic core and F(0) - containing the membrane proton channel, linked together by a central stalk and a peripheral stalk. During catalysis, ATP synthesis in the catalytic domain of F(1) is coupled via a rotary mechanism of the central stalk subunits to proton translocation. Part of the complex F(0) domain. Minor subunit located with subunit a in the membrane. The protein is ATP synthase protein 8 (MT-ATP8) of Oenothera berteroana (Bertero's evening primrose).